The sequence spans 114 residues: Ghrelin (114 aa).

The N-terminal stretch at 1–24 (MNFGKAAIFGVVLFCLLWTEGAQA) is a signal peptide. Thr27 carries the O-decanoyl threonine; alternate lipid modification. Thr27 is lipidated: O-octanoyl threonine; alternate. The propeptide at 55 to 114 (GVEDDLAGEEIGVTFPLDMKMTQEQFQKQRAAVQDFLYSSLLSLGSVQDTEDKNENPQSQ) is removed in mature form.

Belongs to the motilin family. O-octanoylated by GOAT/MBOAT4. O-octanoylation or O-decanoylation is essential for activity. The O-decanoylated form ghrelin-27-C10 differs in the length of the carbon backbone of the carboxylic acid bound to Thr-27. 33% of frog ghrelin is O-decanoylated. Post-translationally, 80% of frog ghrelin has Asn-52 cleaved from its C-terminus giving rise to ghrelin-27. High levels in stomach. Moderate levels in small intestine, pancreas and testis. Low levels in heart, lung and gall bladder.

The protein localises to the secreted. In terms of biological role, ligand for growth hormone secretagogue receptor type 1 (GHSR). Induces the release of growth hormone from the pituitary. Has an appetite-stimulating effect, induces adiposity and stimulates gastric acid secretion. Involved in growth regulation. This Aquarana catesbeiana (American bullfrog) protein is Ghrelin (GHRL).